The primary structure comprises 93 residues: Small ribosomal subunit protein uS19 (93 aa).

Belongs to the universal ribosomal protein uS19 family.

Its function is as follows. Protein S19 forms a complex with S13 that binds strongly to the 16S ribosomal RNA. In Mycobacteroides abscessus (strain ATCC 19977 / DSM 44196 / CCUG 20993 / CIP 104536 / JCM 13569 / NCTC 13031 / TMC 1543 / L948) (Mycobacterium abscessus), this protein is Small ribosomal subunit protein uS19.